Reading from the N-terminus, the 231-residue chain is Somatolactin (231 aa).

Residues 1-24 (MLMFTAIQRGVWVALLWPHLLTAS) form the signal peptide. Disulfide bonds link cysteine 29–cysteine 39, cysteine 89–cysteine 205, and cysteine 222–cysteine 230. Residues asparagine 35 and asparagine 145 are each glycosylated (N-linked (GlcNAc...) asparagine).

It belongs to the somatotropin/prolactin family. In terms of tissue distribution, pituitary gland.

It is found in the secreted. The sequence is that of Somatolactin from Siganus guttatus (Orange-spotted spinefoot).